A 157-amino-acid polypeptide reads, in one-letter code: SsrA-binding protein (157 aa).

This sequence belongs to the SmpB family.

Its subcellular location is the cytoplasm. In terms of biological role, required for rescue of stalled ribosomes mediated by trans-translation. Binds to transfer-messenger RNA (tmRNA), required for stable association of tmRNA with ribosomes. tmRNA and SmpB together mimic tRNA shape, replacing the anticodon stem-loop with SmpB. tmRNA is encoded by the ssrA gene; the 2 termini fold to resemble tRNA(Ala) and it encodes a 'tag peptide', a short internal open reading frame. During trans-translation Ala-aminoacylated tmRNA acts like a tRNA, entering the A-site of stalled ribosomes, displacing the stalled mRNA. The ribosome then switches to translate the ORF on the tmRNA; the nascent peptide is terminated with the 'tag peptide' encoded by the tmRNA and targeted for degradation. The ribosome is freed to recommence translation, which seems to be the essential function of trans-translation. The sequence is that of SsrA-binding protein from Clostridium novyi (strain NT).